Here is a 181-residue protein sequence, read N- to C-terminus: SecB-like chaperone Rv1957 (181 aa).

Thr-2 carries the N-acetylthreonine modification.

The protein belongs to the SecB-like family. In terms of assembly, homotetramer, interacts with antitoxin HigA1.

In terms of biological role, chaperone component of an atypical, type II toxin-antitoxin chaperone (TAC) system. Prevents antitoxin HigA1 aggregation in vitro at a 1:3 chaperone:antitoxin ratio, probably also protects antitoxin HigA1 from protease. Required for neutralization of toxin HigB1 upon ectopic expression in Mycobacterium marinum or E.coli. When expressed in E.coli complements a secB deletion, restores export of OmpA and MBP and inhibits aggregation of proOmpC although it is less efficient than endogenous SecB. Complements the general chaperone function of E.coli SecB less well. The chain is SecB-like chaperone Rv1957 (secBL) from Mycobacterium tuberculosis (strain ATCC 25618 / H37Rv).